The primary structure comprises 461 residues: UDP-glucosyltransferase 1 (461 aa).

Belongs to the UDP-glycosyltransferase family.

It participates in secondary metabolite biosynthesis. UDP-glucosyltransferase; part of the pathway that mediates the biosynthesis of tenellin-type 2-pyridones, iron-chelating compounds involved in iron stress tolerance, competition with the natural competitor fungus Metarhizium robertsii and insect hosts infection. Targets the N-OH hydroxyl residue of 15-hydroxytellenin (15-HT) to produce pyridovericin-N-O-(beta-D-glucopyranoside) which is further methylated by the methyltransferase MT1 to yield pyridovericin-N-O-(4-O-methyl-beta-D-glucopyranoside) (PMGP). The pathway begins with the assembly of the polyketide-amino acid backbone by the hybrid PKS-NRPS tenS with the help of the enoyl reductase tenC. These enzymes catalyze the synthesis of the pyrrolidine-2-dione intermediates pretellinin A, 11-hydropretellenin A, 12-hydropretellenin A, 13-hydropretellenin A, 14-hydropretellenin A, 12-oxopretellenin A and prototellinin D. The cytochrome P450 monooxygenase tenA then catalyzes an oxidative ring expansion of pretenellin A and 14-hydropretellenin A to form the 2-pyridone core, leading to pretenellin B and pyridovericin, respectively. The cytochrome P450 monooxygenase tenB is then required for the selective N-hydroxylation of the 2-pyridone nitrogen of yield tellinin and 15-hydroxytellenin (15-HT), respectively. The UDP-glucosyltransferase GT1 and the methyltransferase MT1, located outside the tenS gene cluster, contribute to the stepwise glycosylation and methylation of 15-HT to obtain the glycoside pyridovericin-N-O-(4-O-methyl-beta-D-glucopyranoside) (PMGP). Additional related compounds such as 1-O-methyl-15-HT, (8Z)-1-O-methyl-15-HT, and O-methyltenellin A are also produced but the enzymes involved in their biosynthesis have still to be determined. This is UDP-glucosyltransferase 1 from Beauveria bassiana (strain ARSEF 2860) (White muscardine disease fungus).